Consider the following 222-residue polypeptide: Protein GrpE (222 aa).

Residues 1–82 are disordered; the sequence is MSDFNKDEYL…KADDTLTPLG (82 aa). The span at 20-71 shows a compositional bias: low complexity; that stretch reads SGQAAPAAASADSAAAAAGATQEGAAQPAAAQSQENGDSAAADGADKAGAAD.

Belongs to the GrpE family. Homodimer.

Its subcellular location is the cytoplasm. Functionally, participates actively in the response to hyperosmotic and heat shock by preventing the aggregation of stress-denatured proteins, in association with DnaK and GrpE. It is the nucleotide exchange factor for DnaK and may function as a thermosensor. Unfolded proteins bind initially to DnaJ; upon interaction with the DnaJ-bound protein, DnaK hydrolyzes its bound ATP, resulting in the formation of a stable complex. GrpE releases ADP from DnaK; ATP binding to DnaK triggers the release of the substrate protein, thus completing the reaction cycle. Several rounds of ATP-dependent interactions between DnaJ, DnaK and GrpE are required for fully efficient folding. The sequence is that of Protein GrpE from Bifidobacterium adolescentis (strain ATCC 15703 / DSM 20083 / NCTC 11814 / E194a).